A 222-amino-acid polypeptide reads, in one-letter code: Cytidylate kinase (222 aa).

Residue 7–15 (GPSASGKSS) participates in ATP binding.

This sequence belongs to the cytidylate kinase family. Type 1 subfamily.

It localises to the cytoplasm. The enzyme catalyses CMP + ATP = CDP + ADP. It carries out the reaction dCMP + ATP = dCDP + ADP. In Borrelia turicatae (strain 91E135), this protein is Cytidylate kinase.